Consider the following 515-residue polypeptide: Hyccin (515 aa).

The segment covering 358–378 (STSQSALSNSSNTSSKNLLGK) has biased composition (low complexity). Disordered regions lie at residues 358 to 410 (STSQ…TQRA) and 491 to 515 (TDLP…LSTD). Over residues 389 to 403 (AGREKEGETCREHLS) the composition is skewed to basic and acidic residues. A compositionally biased stretch (polar residues) spans 498-515 (KQPNQQRPPSISITLSTD).

This sequence belongs to the Hyccin family. In terms of assembly, component of a phosphatidylinositol 4-kinase (PI4K) complex.

It is found in the cytoplasm. The protein resides in the cytosol. Its subcellular location is the cell membrane. Functionally, component of a complex required to localize phosphatidylinositol 4-kinase (PI4K) to the plasma membrane. The complex acts as a regulator of phosphatidylinositol 4-phosphate (PtdIns(4)P) synthesis. This is Hyccin (HYCC1) from Gallus gallus (Chicken).